A 361-amino-acid chain; its full sequence is Peptide chain release factor 1 (361 aa).

Gln235 bears the N5-methylglutamine mark.

This sequence belongs to the prokaryotic/mitochondrial release factor family. Post-translationally, methylated by PrmC. Methylation increases the termination efficiency of RF1.

The protein localises to the cytoplasm. Peptide chain release factor 1 directs the termination of translation in response to the peptide chain termination codons UAG and UAA. This chain is Peptide chain release factor 1, found in Rhodopseudomonas palustris (strain ATCC BAA-98 / CGA009).